We begin with the raw amino-acid sequence, 563 residues long: Solute carrier family 22 member 6 (563 aa).

Residues 1-9 (MAFNDLLQQ) lie on the Cytoplasmic side of the membrane. The helical transmembrane segment at 10 to 30 (VGGVGRFQQIQVTLVVLPLLL) threads the bilayer. Topologically, residues 31–135 (MASHNTLQNF…LVCSHRALRQ (105 aa)) are extracellular. N39, N56, N92, N97, and N113 each carry an N-linked (GlcNAc...) asparagine glycan. The helical transmembrane segment at 136–156 (LAQSLYMVGVLLGAMVFGYLA) threads the bilayer. The Cytoplasmic portion of the chain corresponds to 157–164 (DRLGRRKV). A helical transmembrane segment spans residues 165–187 (LILNYLQTAVSGTCAAFAPNFPI). At 188-190 (YCA) the chain is on the extracellular side. Residues 191–213 (FRLLSGMALAGISLNCMTLNVEW) traverse the membrane as a helical segment. Residues 214-224 (MPIHTRACVGT) lie on the Cytoplasmic side of the membrane. Residues 225–245 (LIGYVYSLGQFLLAGVAYAVP) form a helical membrane-spanning segment. Over 246–248 (HWR) the chain is Extracellular. Residues 249 to 269 (HLQLLVSAPFFAFFIYSWFFI) traverse the membrane as a helical segment. Topologically, residues 270–337 (ESARWHSSSG…ELLRCPTLRH (68 aa)) are cytoplasmic. A helical transmembrane segment spans residues 338-358 (LFLCLSMLWFATSFAYYGLVM). The Extracellular portion of the chain corresponds to 359-368 (DLQGFGVSIY). The helical transmembrane segment at 369-389 (LIQVIFGAVDLPAKLVGFLVI) threads the bilayer. The Cytoplasmic segment spans residues 390–395 (NSLGRR). A helical membrane pass occupies residues 396–416 (PAQMAALLLAGICILLNGVIP). Residues 417–425 (QDQSIVRTS) lie on the Extracellular side of the membrane. A helical transmembrane segment spans residues 426–446 (LAVLGKGCLAASFNCIFLYTG). Topologically, residues 447 to 455 (ELYPTMIRQ) are cytoplasmic. A helical membrane pass occupies residues 456-475 (TGMGMGSTMARVGSIVSPLV). Residues 476 to 484 (SMTAELYPS) lie on the Extracellular side of the membrane. Residues 485-505 (MPLFIYGAVPVAASAVTVLLP) traverse the membrane as a helical segment. The Cytoplasmic segment spans residues 506-563 (ETLGQPLPDTVQDLESRWAPTQKEAGIYPRKGKQTRQQQEHQKYMVPLQASAQEKNGL). The interval 525–563 (PTQKEAGIYPRKGKQTRQQQEHQKYMVPLQASAQEKNGL) is disordered.

This sequence belongs to the major facilitator (TC 2.A.1) superfamily. Organic cation transporter (TC 2.A.1.19) family. In terms of processing, glycosylated. Glycosylation at Asn-113 may occur at a secondary level. Glycosylation is necessary for proper targeting of the transporter to the plasma membrane. In terms of tissue distribution, strongly expressed in kidney. Expressed at lower level in liver, skeletal muscle, brain and placenta. In kidney, found at the basolateral membrane of the proximal tubule. In testis, primarily localized to the basal membrane of Sertoli cells and weakly expressed in Leydig cells and vascular endothelial cells.

The protein resides in the basolateral cell membrane. It is found in the basal cell membrane. The enzyme catalyses (6R)-L-erythro-5,6,7,8-tetrahydrobiopterin(out) + a dicarboxylate(in) = (6R)-L-erythro-5,6,7,8-tetrahydrobiopterin(in) + a dicarboxylate(out). It catalyses the reaction L-erythro-7,8-dihydrobiopterin(out) + a dicarboxylate(in) = L-erythro-7,8-dihydrobiopterin(in) + a dicarboxylate(out). It carries out the reaction L-sepiapterin(out) + a dicarboxylate(in) = L-sepiapterin(in) + a dicarboxylate(out). The catalysed reaction is prostaglandin F2alpha(out) + a dicarboxylate(in) = prostaglandin F2alpha(in) + a dicarboxylate(out). The enzyme catalyses prostaglandin E2(out) + a dicarboxylate(in) = prostaglandin E2(in) + a dicarboxylate(out). It catalyses the reaction 3',5'-cyclic AMP(out) + a dicarboxylate(in) = 3',5'-cyclic AMP(in) + a dicarboxylate(out). It carries out the reaction 3',5'-cyclic GMP(out) + a dicarboxylate(in) = 3',5'-cyclic GMP(in) + a dicarboxylate(out). The catalysed reaction is urate(out) + a dicarboxylate(in) = urate(in) + a dicarboxylate(out). The enzyme catalyses kynurenate(out) + glutarate(in) = kynurenate(in) + glutarate(out). It catalyses the reaction (indol-3-yl)acetate(out) + a dicarboxylate(in) = (indol-3-yl)acetate(in) + a dicarboxylate(out). It carries out the reaction indoxyl sulfate(out) + a dicarboxylate(in) = indoxyl sulfate(in) + a dicarboxylate(out). The catalysed reaction is N-benzoylglycine(out) + a dicarboxylate(in) = N-benzoylglycine(in) + a dicarboxylate(out). The enzyme catalyses 3-carboxy-4-methyl-5-propyl-2-furanpropanoate(out) + a dicarboxylate(in) = 3-carboxy-4-methyl-5-propyl-2-furanpropanoate(in) + a dicarboxylate(out). In terms of biological role, secondary active transporter that functions as a Na(+)-independent organic anion (OA)/dicarboxylate antiporter where the uptake of one molecule of OA into the cell is coupled with an efflux of one molecule of intracellular dicarboxylate such as 2-oxoglutarate or glutarate. Mediates the uptake of OA across the basolateral side of proximal tubule epithelial cells, thereby contributing to the renal elimination of endogenous OA from the systemic circulation into the urine. Functions as a biopterin transporters involved in the uptake and the secretion of coenzymes tetrahydrobiopterin (BH4), dihydrobiopterin (BH2) and sepiapterin to urine, thereby determining baseline levels of blood biopterins. Transports prostaglandin E2 (PGE2) and prostaglandin F2-alpha (PGF2-alpha) and may contribute to their renal excretion. Also mediates the uptake of cyclic nucleotides such as cAMP and cGMP. Involved in the transport of neuroactive tryptophan metabolites kynurenate (KYNA) and xanthurenate (XA) and may contribute to their secretion from the brain. May transport glutamate. Also involved in the disposition of uremic toxins and potentially toxic xenobiotics by the renal organic anion secretory pathway, helping reduce their undesired toxicological effects on the body. Uremic toxins include the indoxyl sulfate (IS), hippurate/N-benzoylglycine (HA), indole acetate (IA), 3-carboxy-4- methyl-5-propyl-2-furanpropionate (CMPF) and urate. Xenobiotics include the mycotoxin ochratoxin (OTA). May also contribute to the transport of organic compounds in testes across the blood-testis-barrier. This Homo sapiens (Human) protein is Solute carrier family 22 member 6.